We begin with the raw amino-acid sequence, 492 residues long: Metal cation symporter ZIP14 (492 aa).

The N-terminal stretch at 1–30 is a signal peptide; that stretch reads MKLLLLHPAFQSCLLLTLLGLWRTTPEAHA. Over 31 to 157 the chain is Extracellular; sequence SSLGAPAISA…PSAVEVWGYG (127 aa). N-linked (GlcNAc...) asparagine glycosylation is found at Asn77, Asn87, and Asn102. Residues 158 to 178 traverse the membrane as a helical segment; that stretch reads LLCVTVISLCSLLGASVVPFM. Topologically, residues 179–186 are cytoplasmic; sequence KKTFYKRL. Residues 187 to 207 form a helical membrane-spanning segment; the sequence is LLYFIALAIGTLYSNALFQLI. The Extracellular portion of the chain corresponds to 208–224; the sequence is PEAFGFNPLEDYYVSKS. The helical transmembrane segment at 225–245 threads the bilayer; the sequence is AVVFGGFYLFFFTEKILKILL. Residues 246–397 are Cytoplasmic-facing; it reads KQKNEHHHGH…LLNAGMSIQQ (152 aa). An HHHGHXHX-motif motif is present at residues 251-258; the sequence is HHHGHSHY. Positions 376–381 match the XEXPHE-motif motif; it reads EEFPHE. A helical membrane pass occupies residues 398-418; it reads ALFFNFLSACCCYLGLAFGIL. Residues 419–424 lie on the Extracellular side of the membrane; sequence AGSHFS. Residues 425 to 445 traverse the membrane as a helical segment; sequence ANWIFALAGGMFLYISLADMF. The Cytoplasmic portion of the chain corresponds to 446 to 460; that stretch reads PEMNEVCQEDERKGS. Residues 461 to 481 form a helical membrane-spanning segment; that stretch reads ILIPFIIQNLGLLTGFTIMVV. Residues 482 to 492 lie on the Extracellular side of the membrane; sequence LTMYSGQIQIG.

Belongs to the ZIP transporter (TC 2.A.5) family. As to quaternary structure, homotrimer. In terms of processing, ubiquitinated. Ubiquitination occurs upon iron depletion. The ubiquitinated form undergoes proteasomal degradation. Post-translationally, N-glycosylated. N-glycosylation at Asn-102 is required for iron-regulated extraction of the transporter from membranes and subsequent proteasomal degradation. Ubiquitously expressed, with higher expression in liver, pancreas, fetal liver, thyroid gland, left and right ventricle, right atrium and fetal heart. Weakly expressed in spleen, thymus, and peripheral blood leukocytes. Expressed in liver and in brain by large neurons in the globus pallidus, the insular cortex and the dentate nucleus and to a lower extent in the putamen and the caudate nucleus (at protein level). Expressed in osteoblasts and giant osteoclast-like cells, but not in osteocytes found osteoblastoma and giant cell tumors (at protein level). Expressed by microvascular capillary endothelial cells that constitute the blood-brain barrier (at protein level). Expressed by macrophages. In terms of tissue distribution, widely expressed but not detected in brain, heart, skeletal muscle, placenta and fetal skin.

It localises to the cell membrane. It is found in the apical cell membrane. The protein localises to the basolateral cell membrane. Its subcellular location is the early endosome membrane. The protein resides in the late endosome membrane. It localises to the lysosome membrane. The catalysed reaction is Zn(2+)(out) + 2 hydrogencarbonate(out) = Zn(2+)(in) + 2 hydrogencarbonate(in). It catalyses the reaction Mn(2+)(out) + 2 hydrogencarbonate(out) = Mn(2+)(in) + 2 hydrogencarbonate(in). It carries out the reaction Fe(2+)(out) + 2 hydrogencarbonate(out) = Fe(2+)(in) + 2 hydrogencarbonate(in). The enzyme catalyses Cd(2+)(out) + 2 hydrogencarbonate(out) = Cd(2+)(in) + 2 hydrogencarbonate(in). In terms of biological role, electroneutral transporter of the plasma membrane mediating the cellular uptake of the divalent metal cations zinc, manganese and iron that are important for tissue homeostasis, metabolism, development and immunity. Functions as an energy-dependent symporter, transporting through the membranes an electroneutral complex composed of a divalent metal cation and two bicarbonate anions. Beside these endogenous cellular substrates, can also import cadmium a non-essential metal which is cytotoxic and carcinogenic. Controls the cellular uptake by the intestinal epithelium of systemic zinc, which is in turn required to maintain tight junctions and the intestinal permeability. Modifies the activity of zinc-dependent phosphodiesterases, thereby indirectly regulating G protein-coupled receptor signaling pathways important for gluconeogenesis and chondrocyte differentiation. Regulates insulin receptor signaling, glucose uptake, glycogen synthesis and gluconeogenesis in hepatocytes through the zinc-dependent intracellular catabolism of insulin. Through zinc cellular uptake also plays a role in the adaptation of cells to endoplasmic reticulum stress. Major manganese transporter of the basolateral membrane of intestinal epithelial cells, it plays a central role in manganese systemic homeostasis through intestinal manganese uptake. Also involved in manganese extracellular uptake by cells of the blood-brain barrier. May also play a role in manganese and zinc homeostasis participating in their elimination from the blood through the hepatobiliary excretion. Also functions in the extracellular uptake of free iron. May also function intracellularly and mediate the transport from endosomes to cytosol of iron endocytosed by transferrin. Plays a role in innate immunity by regulating the expression of cytokines by activated macrophages. In Homo sapiens (Human), this protein is Metal cation symporter ZIP14.